The chain runs to 24 residues: Protein YsdE (24 aa).

This Escherichia coli (strain K12) protein is Protein YsdE.